Reading from the N-terminus, the 258-residue chain is Transmembrane O-methyltransferase homolog (258 aa).

S-adenosyl-L-methionine-binding positions include Glu104, 106-107 (GT), Ser112, Glu130, and Ser160.

It belongs to the class I-like SAM-binding methyltransferase superfamily. Cation-dependent O-methyltransferase family. In terms of assembly, interacts with LHFPL5, PCDH15, TMC1, TMC2 and TMIE. Interacts directly with TMC1. The interaction of TOMT with TMC1 and TMC2 is required for the transportation of TMC1/2 into the stereocilia of hair cells.

The protein resides in the cytoplasm. It localises to the endoplasmic reticulum. It carries out the reaction a catechol + S-adenosyl-L-methionine = a guaiacol + S-adenosyl-L-homocysteine + H(+). Functionally, catalyzes the O-methylation, and thereby the inactivation, of catecholamine neurotransmitters and catechol hormones. Required for auditory function. Component of the cochlear hair cell's mechanotransduction (MET) machinery. Involved in the assembly of the asymmetric tip-link MET complex. Required for transportation of TMC1 and TMC2 proteins into the mechanically sensitive stereocilia of the hair cells. The function in MET is independent of the enzymatic activity. This is Transmembrane O-methyltransferase homolog from Rattus norvegicus (Rat).